Here is a 478-residue protein sequence, read N- to C-terminus: Sodium-coupled neutral amino acid transporter 5 (478 aa).

Residues 1 to 20 form a disordered region; it reads MAISSAEGMELQDPKMNGAL. At 1–57 the chain is on the cytoplasmic side; the sequence is MAISSAEGMELQDPKMNGALPGNAVEQEHEGFLPSHSPSPGRKPAQFMDFEGKTSFG. A helical transmembrane segment spans residues 58 to 80; it reads MSVFNLSNAIMGSGILGLAYAMA. The Extracellular segment spans residues 81-93; it reads HTGILLFLALLLC. The chain crosses the membrane as a helical span at residues 94–114; it reads IALLSSYSIHLLLTCAGVVGI. Residues 115-131 are Cytoplasmic-facing; sequence RAYEQLGQRALGPAGKV. The helical transmembrane segment at 132-152 threads the bilayer; it reads VVAAVICLHNVGAMSSYLFII. The Extracellular segment spans residues 153-172; the sequence is KSELPLVIATFLDMDPEGDW. Residues 173–193 traverse the membrane as a helical segment; the sequence is FLKGNLLIIIVSVLIILPLAL. The Cytoplasmic portion of the chain corresponds to 194-198; it reads MRHLG. The chain crosses the membrane as a helical span at residues 199-219; that stretch reads YLGYTSGLSLTCMLFFLISVI. The Extracellular portion of the chain corresponds to 220 to 263; that stretch reads YKKFQLGCTVGHNGTAVESKSSPSLPIHGLNTSCEAQMFTADSQ. Cys227 and Cys253 are disulfide-bonded. Residue Asn232 is glycosylated (N-linked (GlcNAc...) asparagine). Residues 264-284 traverse the membrane as a helical segment; sequence MFYTVPIMAFAFVCHPEVLPI. Residues 285–301 are Cytoplasmic-facing; sequence YTELCRPSKRRMQAVAN. A helical transmembrane segment spans residues 302 to 322; it reads VSIGAMFCMYGLTATFGYLTF. At 323 to 340 the chain is on the extracellular side; that stretch reads YSSVEAEMLHMYSQHDLL. The helical transmembrane segment at 341-361 threads the bilayer; that stretch reads ILCVRLAVLLAVTLTVPVVLF. Residues 362-382 are Cytoplasmic-facing; it reads PIRRALQQLLFPSKAFSWPRH. Residues 383-403 traverse the membrane as a helical segment; it reads VAIALILLVLVNVLVICVPTI. The Extracellular segment spans residues 404 to 405; it reads RD. The helical transmembrane segment at 406–426 threads the bilayer; the sequence is IFGVIGSTSAPSLIFILPSIF. Over 427–445 the chain is Cytoplasmic; sequence YLRIVPSEVEPLYSWPKIQ. Residues 446 to 466 form a helical membrane-spanning segment; the sequence is ALCFGVLGVLFMAISLGFMFA. Over 467–478 the chain is Extracellular; that stretch reads NWATGQSHVSGH.

It belongs to the amino acid/polyamine transporter 2 family.

The protein localises to the cell membrane. The catalysed reaction is L-serine(out) + Na(+)(out) + H(+)(in) = L-serine(in) + Na(+)(in) + H(+)(out). It catalyses the reaction L-alanine(out) + Na(+)(out) + H(+)(in) = L-alanine(in) + Na(+)(in) + H(+)(out). It carries out the reaction glycine(out) + Na(+)(out) + H(+)(in) = glycine(in) + Na(+)(in) + H(+)(out). The enzyme catalyses L-glutamine(out) + Na(+)(out) + H(+)(in) = L-glutamine(in) + Na(+)(in) + H(+)(out). The catalysed reaction is L-asparagine(out) + Na(+)(out) + H(+)(in) = L-asparagine(in) + Na(+)(in) + H(+)(out). It catalyses the reaction L-histidine(out) + Na(+)(out) + H(+)(in) = L-histidine(in) + Na(+)(in) + H(+)(out). It carries out the reaction L-cysteine(out) + Na(+)(out) + H(+)(in) = L-cysteine(in) + Na(+)(in) + H(+)(out). With respect to regulation, not inhibited by lithium. Partial allosteric regulation on ions sodium binding. Its function is as follows. Symporter that cotransports neutral amino acids and sodium ions, coupled to an H(+) antiporter activity. Releases L-glutamine and glycine from astroglial cells and may participate in the glutamate/GABA-glutamine cycle and the NMDA receptors activation. In addition contributes significantly to L-glutamine uptake in retina, namely in ganglion and Mueller cells and, therefore participates in the retinal glutamate-glutamine cycle. The transport activity is pH sensitive, Li(+) tolerant, bidirectional and associated with large uncoupled fluxes of protons. The transport is electroneutral coupled to the cotransport of 1 Na(+) and the antiport of 1 H(+). May have particular importance for modulation of net hepatic glutamine flux. This is Sodium-coupled neutral amino acid transporter 5 from Bos taurus (Bovine).